The primary structure comprises 591 residues: Indole-3-acetic acid-amido synthetase GH3.10 (591 aa).

It belongs to the IAA-amido conjugating enzyme family. In terms of tissue distribution, expressed in cotyledons and hypocotyls.

In terms of biological role, catalyzes the synthesis of indole-3-acetic acid (IAA)-amino acid conjugates, providing a mechanism for the plant to cope with the presence of excess auxin. Involved in red light-specific hypocotyl elongation. May act downstream of a red light signal transduction and determine the degree of hypocotyl elongation. This is Indole-3-acetic acid-amido synthetase GH3.10 from Arabidopsis thaliana (Mouse-ear cress).